Consider the following 118-residue polypeptide: Acidic phospholipase A2 CM-I (118 aa).

Intrachain disulfides connect C11/C70, C26/C117, C28/C44, C43/C98, C50/C91, C59/C84, and C77/C89. Residues Y27, G29, and G31 each contribute to the Ca(2+) site. H47 is a catalytic residue. Residue D48 participates in Ca(2+) binding. D92 is an active-site residue.

It belongs to the phospholipase A2 family. Group I subfamily. D49 sub-subfamily. Ca(2+) serves as cofactor. As to expression, expressed by the venom gland.

The protein resides in the secreted. It carries out the reaction a 1,2-diacyl-sn-glycero-3-phosphocholine + H2O = a 1-acyl-sn-glycero-3-phosphocholine + a fatty acid + H(+). Functionally, snake venom phospholipase A2 (PLA2) that causes myonecrosis when injected intramuscularly, shows indirect hemolytic activity, abolishes twitches evoked by indirect stimulation earlier than those by direct stimulation (in the mouse phrenic nerve-diaphragm preparation) but does not produce complete neuromuscular block (up to 30 ug/ml) (in the chick biventer cervicis nerve-muscle preparation). PLA2 catalyzes the calcium-dependent hydrolysis of the 2-acyl groups in 3-sn-phosphoglycerides. The chain is Acidic phospholipase A2 CM-I from Naja mossambica (Mozambique spitting cobra).